The sequence spans 530 residues: Hyccin 2 (530 aa).

2 positions are modified to phosphothreonine: Thr30 and Thr306. 2 positions are modified to phosphoserine: Ser321 and Ser341. The disordered stretch occupies residues 328–404 (RREGAEGLNG…SNESPRDSVV (77 aa)). Positions 353-373 (SGASLSSQPHGTKPPSSSQRG) are enriched in polar residues. 4 positions are modified to phosphoserine: Ser430, Ser442, Ser444, and Ser491. Residues 502-530 (EGKELLSPGAPLTKQSRSPSFNMQLISQV) are disordered. Residues 514 to 530 (TKQSRSPSFNMQLISQV) are compositionally biased toward polar residues.

This sequence belongs to the Hyccin family. In terms of assembly, component of a phosphatidylinositol 4-kinase (PI4K) complex, composed of PI4KA, EFR3 (EFR3A or EFR3B), TTC7 (TTC7A or TTC7B) and HYCC (HYCC1 or HYCC2). As to expression, expressed in the central nervous system. Expressed at much lower level in oligodendrocytes than in neurons.

The protein resides in the cytoplasm. Its subcellular location is the cytosol. It localises to the cell membrane. Functionally, component of a complex required to localize phosphatidylinositol 4-kinase (PI4K) to the plasma membrane. This chain is Hyccin 2 (Hycc2), found in Mus musculus (Mouse).